We begin with the raw amino-acid sequence, 252 residues long: 3-dehydroquinate dehydratase (252 aa).

Residues Ser21, 46–48, and Arg82 each bind 3-dehydroquinate; that span reads EWR. Residue His143 is the Proton donor/acceptor of the active site. Lys170 acts as the Schiff-base intermediate with substrate in catalysis. 3-dehydroquinate is bound by residues Arg213, Ser232, and Gln236.

It belongs to the type-I 3-dehydroquinase family. In terms of assembly, homodimer.

It catalyses the reaction 3-dehydroquinate = 3-dehydroshikimate + H2O. The protein operates within metabolic intermediate biosynthesis; chorismate biosynthesis; chorismate from D-erythrose 4-phosphate and phosphoenolpyruvate: step 3/7. In terms of biological role, involved in the third step of the chorismate pathway, which leads to the biosynthesis of aromatic amino acids. Catalyzes the cis-dehydration of 3-dehydroquinate (DHQ) and introduces the first double bond of the aromatic ring to yield 3-dehydroshikimate. The protein is 3-dehydroquinate dehydratase of Escherichia coli O9:H4 (strain HS).